A 363-amino-acid polypeptide reads, in one-letter code: Protein disulfide-isomerase 1 (363 aa).

The N-terminal stretch at methionine 1–alanine 20 is a signal peptide. 2 consecutive Thioredoxin domains span residues glutamate 21 to lysine 132 and threonine 133 to glutamate 285. Residues cysteine 51, cysteine 54, cysteine 172, and cysteine 175 each act as nucleophile in the active site. Intrachain disulfides connect cysteine 51-cysteine 54 and cysteine 172-cysteine 175.

It belongs to the protein disulfide isomerase family.

The protein localises to the endoplasmic reticulum lumen. The enzyme catalyses Catalyzes the rearrangement of -S-S- bonds in proteins.. Participates in the folding of proteins containing disulfide bonds, may be involved in glycosylation, prolyl hydroxylation and triglyceride transfer. This Dictyostelium discoideum (Social amoeba) protein is Protein disulfide-isomerase 1 (pdi1).